A 1374-amino-acid polypeptide reads, in one-letter code: DNA-directed RNA polymerase subunit beta' (1374 aa).

The disordered stretch occupies residues 1-47 (MTSTSPKSRKPSTKTTKSKSKSKSKSKAAKAAAASASPALARTPPQF). Residues 7–28 (KSRKPSTKTTKSKSKSKSKSKA) are compositionally biased toward basic residues. Positions 29–45 (AKAAAASASPALARTPP) are enriched in low complexity. Zn(2+) is bound by residues C258, C325, C332, and C335. The disordered stretch occupies residues 1343–1374 (VRPTGENELEEEQLPDPSALEGLQQEGLLTEE). Residues 1362-1374 (LEGLQQEGLLTEE) are compositionally biased toward low complexity.

The protein belongs to the RNA polymerase beta' chain family. RpoC2 subfamily. In cyanobacteria the RNAP catalytic core is composed of 2 alpha, 1 beta, 1 beta', 1 gamma and 1 omega subunit. When a sigma factor is associated with the core the holoenzyme is formed, which can initiate transcription. Zn(2+) is required as a cofactor.

The catalysed reaction is RNA(n) + a ribonucleoside 5'-triphosphate = RNA(n+1) + diphosphate. DNA-dependent RNA polymerase catalyzes the transcription of DNA into RNA using the four ribonucleoside triphosphates as substrates. The polypeptide is DNA-directed RNA polymerase subunit beta' (Prochlorococcus marinus (strain MIT 9303)).